A 363-amino-acid polypeptide reads, in one-letter code: Peroxidase (363 aa).

Residues 1-20 form the signal peptide; the sequence is MKLSLLSTFAAVIIGALALP. Residue Gln-21 is modified to Pyrrolidone carboxylic acid. 4 cysteine pairs are disulfide-bonded: Cys-31–Cys-43, Cys-42–Cys-312, Cys-62–Cys-148, and Cys-276–Cys-341. The Proton acceptor role is filled by His-75. Ca(2+) is bound by residues Asp-76, Gly-94, Asp-96, and Ser-98. Residue Asn-162 is glycosylated (N-linked (GlcNAc...) (high mannose) asparagine). His-203 contacts heme b. Positions 204, 221, 223, 226, and 228 each coordinate Ca(2+). A glycan (O-linked (Man...) serine) is linked at Ser-358.

Belongs to the peroxidase family. Ligninase subfamily. The cofactor is Ca(2+). It depends on heme b as a cofactor.

Its subcellular location is the secreted. It carries out the reaction 2 a phenolic donor + H2O2 = 2 a phenolic radical donor + 2 H2O. This Coprinopsis cinerea (strain Okayama-7 / 130 / ATCC MYA-4618 / FGSC 9003) (Inky cap fungus) protein is Peroxidase (CIP1).